The chain runs to 161 residues: uncharacterized protein (161 aa).

Disordered regions lie at residues 47-83 (KPAKRNIHGHNNHTRSSNHPHSGAHSNINHNNNNNIN) and 104-137 (RRLQQNGGGGDSSSSRSSNNNNSTNDNKPQSKNY). A compositionally biased stretch (basic residues) spans 50–64 (KRNIHGHNNHTRSSN). Low complexity-rich tracts occupy residues 73–83 (NINHNNNNNIN) and 115–130 (SSSSRSSNNNNSTNDN).

This is an uncharacterized protein from Dictyostelium discoideum (Social amoeba).